Here is a 397-residue protein sequence, read N- to C-terminus: 3-ketoacyl-CoA thiolase, mitochondrial (397 aa).

Residues 1–16 (MALLRGVFIVAAKRTP) constitute a mitochondrion; not cleaved transit peptide. Lysine 25 is subject to N6-acetyllysine; alternate. The residue at position 25 (lysine 25) is an N6-succinyllysine; alternate. Lysine 45 carries the post-translational modification N6-succinyllysine. Catalysis depends on cysteine 92, which acts as the Acyl-thioester intermediate. Threonine 119 bears the Phosphothreonine mark. At serine 121 the chain carries Phosphoserine. Tyrosine 127 is subject to Phosphotyrosine. At threonine 136 the chain carries Phosphothreonine. An N6-acetyllysine; alternate mark is found at lysine 137, lysine 143, lysine 158, lysine 171, lysine 191, and lysine 209. 6 positions are modified to N6-succinyllysine; alternate: lysine 137, lysine 143, lysine 158, lysine 171, lysine 191, and lysine 209. An N6-succinyllysine mark is found at lysine 211, lysine 212, and lysine 214. CoA-binding residues include arginine 224 and threonine 227. N6-succinyllysine is present on lysine 240. Lysine 241 is subject to N6-acetyllysine. Serine 251 lines the CoA pocket. N6-acetyllysine is present on residues lysine 269 and lysine 270. At lysine 305 the chain carries N6-acetyllysine; alternate. An N6-succinyllysine; alternate modification is found at lysine 305. Serine 310 bears the Phosphoserine mark. Lysine 312 is modified (N6-acetyllysine; alternate). At lysine 312 the chain carries N6-succinyllysine; alternate. At serine 333 the chain carries Phosphoserine. An N6-acetyllysine modification is found at lysine 340. Serine 344 is subject to Phosphoserine. Lysine 375 bears the N6-acetyllysine mark. Cysteine 382 serves as the catalytic Proton donor/acceptor.

Belongs to the thiolase-like superfamily. Thiolase family. Homotetramer. Interacts with BNIP3. In terms of tissue distribution, expressed in liver, brown adipose tissue and heart (at protein level).

It is found in the mitochondrion. It carries out the reaction an acyl-CoA + acetyl-CoA = a 3-oxoacyl-CoA + CoA. The enzyme catalyses 2 acetyl-CoA = acetoacetyl-CoA + CoA. The catalysed reaction is acetyl-CoA + H2O = acetate + CoA + H(+). It catalyses the reaction propanoyl-CoA + H2O = propanoate + CoA + H(+). It carries out the reaction butanoyl-CoA + H2O = butanoate + CoA + H(+). The enzyme catalyses hexanoyl-CoA + H2O = hexanoate + CoA + H(+). The catalysed reaction is octanoyl-CoA + H2O = octanoate + CoA + H(+). It catalyses the reaction decanoyl-CoA + H2O = decanoate + CoA + H(+). It carries out the reaction dodecanoyl-CoA + H2O = dodecanoate + CoA + H(+). The enzyme catalyses tetradecanoyl-CoA + H2O = tetradecanoate + CoA + H(+). The catalysed reaction is hexadecanoyl-CoA + H2O = hexadecanoate + CoA + H(+). It functions in the pathway lipid metabolism; fatty acid beta-oxidation. The 3-oxoacetyl-CoA thiolase activity is inhibited by acetyl-CoA while the acetyl-CoA hydrolase activity is inhibited by acetoacetyl-CoA. In the production of energy from fats, this is one of the enzymes that catalyzes the last step of the mitochondrial beta-oxidation pathway, an aerobic process breaking down fatty acids into acetyl-CoA. Using free coenzyme A/CoA, catalyzes the thiolytic cleavage of medium- to long-chain unbranched 3-oxoacyl-CoAs into acetyl-CoA and a fatty acyl-CoA shortened by two carbon atoms. Also catalyzes the condensation of two acetyl-CoA molecules into acetoacetyl-CoA and could be involved in the production of ketone bodies. Also displays hydrolase activity on various fatty acyl-CoAs. Thereby, could be responsible for the production of acetate in a side reaction to beta-oxidation. Abolishes BNIP3-mediated apoptosis and mitochondrial damage. This chain is 3-ketoacyl-CoA thiolase, mitochondrial (Acaa2), found in Rattus norvegicus (Rat).